Here is a 472-residue protein sequence, read N- to C-terminus: FAD-dependent monooxygenase ltmM (472 aa).

Residues 7–27 traverse the membrane as a helical segment; it reads VIIVGGSVAGLSLAHCLEKIG. 3 residues coordinate FAD: Glu-34, Gly-48, and Arg-107. Asn-186 carries N-linked (GlcNAc...) asparagine glycosylation. Positions 306 and 319 each coordinate FAD. A helical transmembrane segment spans residues 450-470; it reads IVYALYLVAAAAFILYCLSSL.

Belongs to the paxM FAD-dependent monooxygenase family. FAD is required as a cofactor.

It is found in the membrane. Its pathway is secondary metabolite biosynthesis. Functionally, FAD-dependent monooxygenase; part of the gene cluster that mediates the biosynthesis of lolitrems, indole-diterpene mycotoxins that are potent tremorgens in mammals, and are synthesized by clavicipitaceous fungal endophytes in association with their grass hosts. The geranylgeranyl diphosphate (GGPP) synthase ltmG is proposed to catalyze the first step in lolitrem biosynthesis. LtmG catalyzes a series of iterative condensations of isopentenyl diphosphate (IPP) with dimethylallyl diphosphate (DMAPP), geranyl diphosphate (GPP), and farnesyl diphosphate (FPP), to form GGPP. GGPP then condenses with indole-3-glycerol phosphate to form 3-geranylgeranylindole, an acyclic intermediate, to be incorporated into paxilline. Either ltmG or ltmC could be responsible for this step, as both are putative prenyl transferases. The FAD-dependent monooxygenase ltmM then catalyzes the epoxidation of the two terminal alkenes of the geranylgeranyl moiety, which is subsequently cyclized by ltmC, to paspaline. The cytochrome P450 monooxygenases ltmQ and ltmP can sequentially oxidize paspaline to terpendole E and terpendole F. Alternatively, ltmP converts paspaline to an intermediate which is oxidized by ltmQ to terpendole F. LtmF, ltmK, ltmE and ltmJ appear to be unique to the epichloe endophytes. The prenyltransferase ltmF is involved in the 27-hydroxyl-O-prenylation. The cytochrome P450 monooxygenase ltmK is required for the oxidative acetal ring formation. The multi-functional prenyltransferase ltmE is required for C20- and C21-prenylations of the indole ring of paspalanes and acts together with the cytochrome P450 monooxygenase ltmJ to yield lolitremanes by multiple oxidations and ring closures. The stereoisomer pairs of lolitriol and lolitrem N or lolitrem B and lolitrem F may be attributed to variations in the way in which ring closure can occur under the action of ltmJ. While the major product of this pathway is lolitrem B, the prenyl transferases and cytochrome P450 monooxygenases identified in this pathway have a remarkable versatility in their regio- and stereo-specificities to generate a diverse range of metabolites that are products of a metabolic grid rather than a linear pathway. The polypeptide is FAD-dependent monooxygenase ltmM (ltmM) (Epichloe festucae (strain Fl1)).